A 119-amino-acid polypeptide reads, in one-letter code: MGLAPSLATLAIALVFLGISLIFLVPAMVQGLYSIVSGVFSVASSVSNETGCPQSTEVVQLSNQTASISVPSQYAGIYTLYLSFISFVGSIFTDPIALIMLILVSLIITLFAFYYKNQG.

The next 3 helical transmembrane spans lie at 9–29 (TLAI…PAMV), 73–93 (QYAG…SIFT), and 95–115 (PIAL…AFYY).

It localises to the host membrane. The chain is Putative transmembrane protein ORF119 from Acidianus convivator (ATV).